Consider the following 474-residue polypeptide: ATP synthase subunit beta (474 aa).

Residue 152–159 coordinates ATP; the sequence is GGAGVGKT.

It belongs to the ATPase alpha/beta chains family. In terms of assembly, F-type ATPases have 2 components, CF(1) - the catalytic core - and CF(0) - the membrane proton channel. CF(1) has five subunits: alpha(3), beta(3), gamma(1), delta(1), epsilon(1). CF(0) has three main subunits: a(1), b(2) and c(9-12). The alpha and beta chains form an alternating ring which encloses part of the gamma chain. CF(1) is attached to CF(0) by a central stalk formed by the gamma and epsilon chains, while a peripheral stalk is formed by the delta and b chains.

It is found in the cell inner membrane. The enzyme catalyses ATP + H2O + 4 H(+)(in) = ADP + phosphate + 5 H(+)(out). Functionally, produces ATP from ADP in the presence of a proton gradient across the membrane. The catalytic sites are hosted primarily by the beta subunits. The protein is ATP synthase subunit beta of Paramagnetospirillum magneticum (strain ATCC 700264 / AMB-1) (Magnetospirillum magneticum).